A 119-amino-acid chain; its full sequence is Holo-[acyl-carrier-protein] synthase (119 aa).

Mg(2+)-binding residues include Asp7 and Glu56.

It belongs to the P-Pant transferase superfamily. AcpS family. Requires Mg(2+) as cofactor.

It is found in the cytoplasm. The enzyme catalyses apo-[ACP] + CoA = holo-[ACP] + adenosine 3',5'-bisphosphate + H(+). Functionally, transfers the 4'-phosphopantetheine moiety from coenzyme A to a Ser of acyl-carrier-protein. This chain is Holo-[acyl-carrier-protein] synthase, found in Chlamydia trachomatis serovar D (strain ATCC VR-885 / DSM 19411 / UW-3/Cx).